Reading from the N-terminus, the 306-residue chain is Ciliary microtubule inner protein 2B (306 aa).

A disordered region spans residues 61–92; sequence QSNPFPPPRDHSFDGGSQELGGRRQHPGDPNL.

The protein belongs to the CIMIP2 family. In terms of tissue distribution, expressed in airway epithelial cells.

The protein resides in the cytoplasm. Its subcellular location is the cytoskeleton. The protein localises to the cilium axoneme. In terms of biological role, microtubule inner protein (MIP) part of the dynein-decorated doublet microtubules (DMTs) in cilia axoneme, which is required for motile cilia beating. The sequence is that of Ciliary microtubule inner protein 2B (cimip2b) from Xenopus tropicalis (Western clawed frog).